The chain runs to 94 residues: Large ribosomal subunit protein bL27 (94 aa).

A propeptide spanning residues 1 to 9 is cleaved from the precursor; that stretch reads MLRLDLQFF.

This sequence belongs to the bacterial ribosomal protein bL27 family. Post-translationally, the N-terminus is cleaved by ribosomal processing cysteine protease Prp.

This chain is Large ribosomal subunit protein bL27, found in Bacillus pumilus (strain SAFR-032).